A 221-amino-acid polypeptide reads, in one-letter code: MQDFAFAALSIWLCLGATALAESHGPQHCTSPNMTGVLTVMALTGGEIKATGHYSYDSTNKKLRFTESEMHLNKTEHLEDYLMLFEEGVFYDIDMKNQSCKKMSLHSHAHALELPAGAAHQVELFLGSDTVQEDNIKVNIWMGSVAETKGQYSALTTVGECLPLSTFYSTDSITLLFSNSEVVTEVKAPEMFTLPSFCEAVELEETPKGQKNDFFNIFNTV.

The signal sequence occupies residues 1-21 (MQDFAFAALSIWLCLGATALA). N33, N73, and N97 each carry an N-linked (GlcNAc...) asparagine glycan.

This sequence belongs to the ependymin family. Binds calcium through the terminal sialic acids. In terms of tissue distribution, EPDs are synthesized in the meninx and secreted in the cerebrospinal fluid.

It localises to the secreted. Functionally, may play a role in neural plasticity. May be involved during axon regeneration. The chain is Ependymin-2 (epd2) from Oncorhynchus mykiss (Rainbow trout).